A 1733-amino-acid polypeptide reads, in one-letter code: MTAVVNGNSKRYSWWWDSHISPKNSKWLQENLTDMDSKVKQMIKVIEEDADSFARRAEMYYKKRPELMKLVEEFYRAYRALAERYDHATGVIRHAQQTMAEAFPNQDPMMFGEESPLGSSTDGFDPQTPDSYPPIRAPVYPDDLRKGAFGISSSHLSTVKRNIAFMEDPQSVSSGKGFKTAKARKGLNFNNVDGKEINAKVLSESERASKAEAEIVALKDALSKVQAEKEASLAQFDQNLEKLSNLESEVSRAQEDSRVLIERATRAEAEVETLRESLSKVEVEKESSLLQYQQCLQNIADLEDRISLAQKEAGEVDERANRAEAETLALKQSLVSSETDKEAALVQYQQCLKTISNLEERLHKAEEDSRLTNQRAENAEGEVESLKQKVSKLIEENEAYELQYQQCLDTIADLKLKLFHAQEETQRLSREIEDGVAKLKFAEEKCVVLERSNQNLHSELDGLLEKLGNQSHELTEKQKELGRLWTCVQEENLRFMEAETAFQTLQQLHSQSQEELSTLALELQNRSQILKDMEARNNGLQEEVQEAKDQSKSLNELNLSSAASIKSLQEEVSKLRETIQKLEAEVELRVDQRNALQQEIYCLKEELSQIGKKHQSMVEQVELVGLHPESFGSSVKELQEENSKLKEIRERESIEKTALIEKLEMMEKLVQKNLLLENSISDLNAELETIRGKLKTLEEASMSLAEEKSGLHSEKDMLISRLQSATENSKKLSEENMVLENSLFNANVELEELKSKLKSLEESCHLLNDDKTTLTSERESLLSHIDTMRKRIEDLEKEHAELKVKVLELATERESSLQKIEELGVSLNAKDCEYASFVQFSESRMNGMESTIHHLQDENQCRVREYQVELDRAHDAHIEIIVLQKCLQDWLEKSSSLIAENQDIKEASKLLEKLVSELEEENIGKQVQIDSSINCIKILRTGIYQVLMKLEIIPGIGSGDENSRDQRNMHDILNRLEDMQTMLLSIRDENQHSAIENLVLIEFLRQLKSEAVGIETEKKILEEELESQCQQLSFSRDETQKLIFVNGELTTKVNQGVNREKVLMVEIEDFHRQVLQLRDDYTILQGDNNKTLDEKAYLTKSTLQLEEEKCKLEDDISLLLSETIYQSNLIILLEDVILEKLSGAMKLNEDLDRLSIVKCKLEEEVRELGDKLKSADIANFQLQVVLEKSNAELLSARSANVHLEHEIANVKVQKEKELLEAMLMISIMQNEKSELSKAVEGLECRYKEAKAIEEDRDKQVLRLRGDYDEQVKKNSHSNEANLKLEADLMNLLMELEEIKVEKENLNQELFTERNEIELWESQSATLFGELQISAVHETLLEGLTNELVEACKNLESRSTLKDREIEQLKGRVNNLEDANKGQNDLMCKYAQAIFLLKESIQSLEKHAMLHEFENGPATETASLVDNSDGFLEIQELHLRIKAIEEAITKKLAMEELKTSSARRSRRRNGSLRKQNHEIYSEETEMITKDIVLDQVSDCSSYGISTRDILKIEDDHSLEAKSQNPPKGKSLSEESLVVDKLEISDRFTDPNKDANKRKVLERLNSDLQKLSNLHVAVEDLKIKVETEEKDEKGKENEYETIKGQINEAEEALEKLLSINRKLVTKVQNGFERSDGSKSSMDLDENESSRRRRISEQARRGSEKIGRLQLEIQRLQFLLLKLEGDREDRAKAKISDSKTRILLRDYIYSGVRGERRKRIKKRFAFCGCVQPPPSP.

One can recognise an NAB domain in the interval tyrosine 12–isoleucine 92. Coiled-coil stretches lie at residues lysine 195–serine 816, leucine 897–serine 931, aspartate 960–isoleucine 1043, and alanine 1196–methionine 1386. The tract at residues leucine 1456–histidine 1476 is disordered. The span at serine 1460–serine 1470 shows a compositional bias: basic residues. Coiled coils occupy residues alanine 1553–asparagine 1627 and serine 1653–aspartate 1686. The tract at residues glycine 1628 to alanine 1656 is disordered.

Belongs to the NET family.

Functionally, plant-specific actin binding protein. May be part of a membrane-cytoskeletal adapter complex. The sequence is that of Protein NETWORKED 1D from Arabidopsis thaliana (Mouse-ear cress).